Here is a 307-residue protein sequence, read N- to C-terminus: Methionyl-tRNA formyltransferase (307 aa).

108–111 (SLLP) contacts (6S)-5,6,7,8-tetrahydrofolate.

The protein belongs to the Fmt family.

It carries out the reaction L-methionyl-tRNA(fMet) + (6R)-10-formyltetrahydrofolate = N-formyl-L-methionyl-tRNA(fMet) + (6S)-5,6,7,8-tetrahydrofolate + H(+). Attaches a formyl group to the free amino group of methionyl-tRNA(fMet). The formyl group appears to play a dual role in the initiator identity of N-formylmethionyl-tRNA by promoting its recognition by IF2 and preventing the misappropriation of this tRNA by the elongation apparatus. This chain is Methionyl-tRNA formyltransferase, found in Xylella fastidiosa (strain 9a5c).